The sequence spans 243 residues: NAD-dependent protein deacetylase (243 aa).

The 243-residue stretch at 1–243 folds into the Deacetylase sirtuin-type domain; it reads MRNDLETLKH…VSVVKSLMTE (243 aa). Residues A24, F35, R36, Q105, I107, D108, and H123 each contribute to the NAD(+) site. Nicotinamide is bound at residue F35. Residues I107 and D108 each contribute to the nicotinamide site. The active-site Proton acceptor is the H123. Positions 131, 134, 151, and 154 each coordinate Zn(2+). NAD(+) contacts are provided by S192, S193, N215, and D232.

It belongs to the sirtuin family. Class U subfamily. Requires Zn(2+) as cofactor.

It is found in the cytoplasm. It catalyses the reaction N(6)-acetyl-L-lysyl-[protein] + NAD(+) + H2O = 2''-O-acetyl-ADP-D-ribose + nicotinamide + L-lysyl-[protein]. In terms of biological role, NAD-dependent protein deacetylase which modulates the activities of several enzymes which are inactive in their acetylated form. The polypeptide is NAD-dependent protein deacetylase (Staphylococcus aureus (strain MSSA476)).